Reading from the N-terminus, the 321-residue chain is uncharacterized protein (321 aa).

The Cytoplasmic portion of the chain corresponds to 1-5; sequence MKQQA. Residues 6–26 traverse the membrane as a helical segment; sequence GIGILLALTTAICWGALPIAM. In terms of domain architecture, EamA 1 spans 17–144; sequence ICWGALPIAM…LLSGLVMFFN (128 aa). Residues 27 to 35 lie on the Periplasmic side of the membrane; that stretch reads KQVLEVMEP. Residues 36 to 56 form a helical membrane-spanning segment; it reads PTIVFYRFLMASIGLGAILAV. Topologically, residues 57–70 are cytoplasmic; that stretch reads KKRLPPLRVFRKPR. Residues 71–91 traverse the membrane as a helical segment; it reads WLILLAVATAGLFGNFILFSS. Residues 92–99 lie on the Periplasmic side of the membrane; that stretch reads SLQYLSPT. The helical transmembrane segment at 100–120 threads the bilayer; the sequence is ASQVIGQLSPVGMMVASVFIL. Topologically, residues 121 to 130 are cytoplasmic; that stretch reads KEKMRSTQVV. Residues 131–151 traverse the membrane as a helical segment; it reads GALMLLSGLVMFFNTSLVEIF. Topologically, residues 152–156 are periplasmic; the sequence is TKLTD. Residues 157 to 177 form a helical membrane-spanning segment; it reads YTWGVIFGVGAATVWVSYGVA. One can recognise an EamA 2 domain in the interval 169 to 292; the sequence is TVWVSYGVAQ…GYLGAFVVVA (124 aa). The Cytoplasmic portion of the chain corresponds to 178 to 190; the sequence is QKVLLRRLASPQI. A helical membrane pass occupies residues 191–211; sequence LFLLYTLCTIALFPLAKPGVI. Topologically, residues 212 to 216 are periplasmic; it reads AQLSH. The chain crosses the membrane as a helical span at residues 217 to 237; the sequence is WQLACLIFCGLNTLVGYGALA. The Cytoplasmic segment spans residues 238–249; the sequence is EAMARWQAAQVS. A helical transmembrane segment spans residues 250 to 270; it reads AIITLTPLFTLFFSDLLSLAW. Topologically, residues 271–278 are periplasmic; that stretch reads PDFFARPM. Residues 279-299 form a helical membrane-spanning segment; the sequence is LNLLGYLGAFVVVAGAMYSAI. Topologically, residues 300-321 are cytoplasmic; the sequence is GHRIWGGLRKHTTVVSQPRAGE.

The protein belongs to the EamA transporter family.

The protein resides in the cell inner membrane. This is an uncharacterized protein from Escherichia coli O157:H7.